The sequence spans 366 residues: Beta-1,3-glucan-binding protein (366 aa).

An N-terminal signal peptide occupies residues 1–17 (MKGFVASVVLLACGALA). The GH16 domain maps to 18 to 364 (ADIVEPEDCT…YVRVWKMEST (347 aa)). Residue Asn66 is glycosylated (N-linked (GlcNAc...) asparagine).

The protein belongs to the glycosyl hydrolase 16 family. As to expression, constitutively expressed in hemocytes.

The protein localises to the secreted. In terms of biological role, binds to beta-1,3-glucan. May play a role in recognition of microorganisms and in activation of the prophenoloxidase cascade. The chain is Beta-1,3-glucan-binding protein from Penaeus monodon (Giant tiger prawn).